A 113-amino-acid polypeptide reads, in one-letter code: Large ribosomal subunit protein bL19 (113 aa).

This sequence belongs to the bacterial ribosomal protein bL19 family.

Functionally, this protein is located at the 30S-50S ribosomal subunit interface and may play a role in the structure and function of the aminoacyl-tRNA binding site. The polypeptide is Large ribosomal subunit protein bL19 (Mycobacterium marinum (strain ATCC BAA-535 / M)).